Here is a 294-residue protein sequence, read N- to C-terminus: sn-glycerol-3-phosphate transport system permease protein UgpA (294 aa).

Residues 1 to 11 (MSPSRPGFSCS) are Cytoplasmic-facing. The chain crosses the membrane as a helical span at residues 12-32 (WLPYLLVLPQLAITAIFFLWP). The Periplasmic portion of the chain corresponds to 33 to 80 (AGEALWYSVQTLDPFGLSSEFVGLSNFIQLFQDEYYLASFYTTLIFSA). The ABC transmembrane type-1 domain occupies 72-284 (FYTTLIFSAL…LLVIGLTVIQ (213 aa)). Residues 81 to 101 (LVAGIGLNVSLFLAAMVDYVL) traverse the membrane as a helical segment. Residues 102-109 (RGSRLYQT) lie on the Cytoplasmic side of the membrane. The helical transmembrane segment at 110-130 (LLILPYAVAPAVAAVLWIFLF) threads the bilayer. Topologically, residues 131 to 157 (DPGLGLITHALAKLGYSWNHAQNSGQA) are periplasmic. Residues 158-178 (MFLVVLASVWKQISYNFLFFL) form a helical membrane-spanning segment. Residues 179–207 (AALQSIPKSLVEAAAIDGAGPVRRFFNLV) are Cytoplasmic-facing. The chain crosses the membrane as a helical span at residues 208-228 (LPLISPVSFFLLVVNLVYAFF). The Periplasmic segment spans residues 229–262 (DTFPVIDAATGGGPVQATTTLIYKIYREGFAGLD). A helical membrane pass occupies residues 263-283 (LSSSAAQSVILMLLVIGLTVI). Residues 284 to 294 (QFRFVERKVRY) are Cytoplasmic-facing.

It belongs to the binding-protein-dependent transport system permease family. UgpAE subfamily. The complex is composed of two ATP-binding proteins (UgpC), two transmembrane proteins (UgpA and UgpE) and a solute-binding protein (UgpB).

It localises to the cell inner membrane. Part of the ABC transporter complex UgpBAEC involved in sn-glycerol-3-phosphate (G3P) import. Probably responsible for the translocation of the substrate across the membrane. The protein is sn-glycerol-3-phosphate transport system permease protein UgpA (ugpA) of Yersinia pseudotuberculosis serotype I (strain IP32953).